The following is a 495-amino-acid chain: NADH-ubiquinone oxidoreductase chain 4 (495 aa).

A run of 11 helical transmembrane segments spans residues 9–29 (YSNL…PLFI), 39–59 (LIGL…RIQF), 89–109 (ISLF…SVGW), 139–159 (LLLF…IIGV), 173–193 (FFLY…LILF), 214–234 (IFLW…VPVH), 272–292 (FPEA…IAII), 313–333 (VAHM…GIGG), 335–355 (ILPM…VGVL), 367–387 (YGGL…FTLA), and 413–433 (LVAT…LWLY).

The protein belongs to the complex I subunit 4 family.

Its subcellular location is the mitochondrion membrane. The catalysed reaction is a ubiquinone + NADH + 5 H(+)(in) = a ubiquinol + NAD(+) + 4 H(+)(out). Its function is as follows. Core subunit of the mitochondrial membrane respiratory chain NADH dehydrogenase (Complex I) that is believed to belong to the minimal assembly required for catalysis. Complex I functions in the transfer of electrons from NADH to the respiratory chain. The immediate electron acceptor for the enzyme is believed to be ubiquinone. This chain is NADH-ubiquinone oxidoreductase chain 4 (ND4), found in Brassica campestris (Field mustard).